A 198-amino-acid chain; its full sequence is Recombination protein RecR (198 aa).

A C4-type zinc finger spans residues C58 to C73. The Toprim domain maps to N81–P175.

This sequence belongs to the RecR family.

Functionally, may play a role in DNA repair. It seems to be involved in an RecBC-independent recombinational process of DNA repair. It may act with RecF and RecO. The polypeptide is Recombination protein RecR (Halothermothrix orenii (strain H 168 / OCM 544 / DSM 9562)).